Reading from the N-terminus, the 725-residue chain is Glutamine-dependent NAD(+) synthetase (725 aa).

The CN hydrolase domain occupies 4-274 (LKVATCNLNQ…VEVIISQVDL (271 aa)). Glutamate 44 functions as the Proton acceptor; for glutaminase activity in the catalytic mechanism. Lysine 113 acts as the For glutaminase activity in catalysis. Residue cysteine 174 is the Nucleophile; for glutaminase activity of the active site. The tract at residues 324 to 709 (YHSPQEEIAF…FPEEEANSNK (386 aa)) is ligase. 354 to 361 (PLSGGADS) serves as a coordination point for ATP. Serine 356 is an active-site residue.

The protein in the C-terminal section; belongs to the NAD synthetase family.

It carries out the reaction deamido-NAD(+) + L-glutamine + ATP + H2O = L-glutamate + AMP + diphosphate + NAD(+) + H(+). It participates in cofactor biosynthesis; NAD(+) biosynthesis; NAD(+) from deamido-NAD(+) (L-Gln route): step 1/1. This is Glutamine-dependent NAD(+) synthetase from Arabidopsis thaliana (Mouse-ear cress).